Here is an 81-residue protein sequence, read N- to C-terminus: Photosystem I iron-sulfur center (81 aa).

4Fe-4S ferredoxin-type domains lie at 2-31 (SHTV…MAPW) and 39-68 (VASA…VRVY). Positions 11, 14, 17, 21, 48, 51, 54, and 58 each coordinate [4Fe-4S] cluster.

In terms of assembly, the eukaryotic PSI reaction center is composed of at least 11 subunits. The cofactor is [4Fe-4S] cluster.

Its subcellular location is the plastid. It localises to the chloroplast thylakoid membrane. It catalyses the reaction reduced [plastocyanin] + hnu + oxidized [2Fe-2S]-[ferredoxin] = oxidized [plastocyanin] + reduced [2Fe-2S]-[ferredoxin]. Its function is as follows. Apoprotein for the two 4Fe-4S centers FA and FB of photosystem I (PSI); essential for photochemical activity. FB is the terminal electron acceptor of PSI, donating electrons to ferredoxin. The C-terminus interacts with PsaA/B/D and helps assemble the protein into the PSI complex. Required for binding of PsaD and PsaE to PSI. PSI is a plastocyanin/cytochrome c6-ferredoxin oxidoreductase, converting photonic excitation into a charge separation, which transfers an electron from the donor P700 chlorophyll pair to the spectroscopically characterized acceptors A0, A1, FX, FA and FB in turn. The sequence is that of Photosystem I iron-sulfur center from Tupiella akineta (Green alga).